A 109-amino-acid polypeptide reads, in one-letter code: UPF0060 membrane protein HEAR0108 (109 aa).

4 helical membrane-spanning segments follow: residues 7 to 27 (VALF…PYLW), 33 to 53 (SIWL…LLSL), 63 to 83 (AAYG…VDGI), and 87 to 107 (NWDV…MFAP).

This sequence belongs to the UPF0060 family.

It is found in the cell inner membrane. In Herminiimonas arsenicoxydans, this protein is UPF0060 membrane protein HEAR0108.